The primary structure comprises 487 residues: Glycogen synthase 1 (487 aa).

Lys15 contributes to the ADP-alpha-D-glucose binding site.

It belongs to the glycosyltransferase 1 family. Bacterial/plant glycogen synthase subfamily.

It carries out the reaction [(1-&gt;4)-alpha-D-glucosyl](n) + ADP-alpha-D-glucose = [(1-&gt;4)-alpha-D-glucosyl](n+1) + ADP + H(+). The protein operates within glycan biosynthesis; glycogen biosynthesis. Synthesizes alpha-1,4-glucan chains using ADP-glucose. This chain is Glycogen synthase 1, found in Nitrosococcus oceani (strain ATCC 19707 / BCRC 17464 / JCM 30415 / NCIMB 11848 / C-107).